The following is a 397-amino-acid chain: Phosphoglycerate kinase (397 aa).

Substrate is bound by residues 21–23, Arg37, 60–63, Arg119, and Arg152; these read DFN and HLGR. ATP contacts are provided by residues Lys203, Gly294, Glu325, and 354–357; that span reads GGDS.

The protein belongs to the phosphoglycerate kinase family. In terms of assembly, monomer.

The protein resides in the cytoplasm. The catalysed reaction is (2R)-3-phosphoglycerate + ATP = (2R)-3-phospho-glyceroyl phosphate + ADP. It participates in carbohydrate degradation; glycolysis; pyruvate from D-glyceraldehyde 3-phosphate: step 2/5. The sequence is that of Phosphoglycerate kinase from Chlorobium luteolum (strain DSM 273 / BCRC 81028 / 2530) (Pelodictyon luteolum).